Reading from the N-terminus, the 973-residue chain is UvrABC system protein A (973 aa).

34-41 (GLSGSGKS) contributes to the ATP binding site. 2 consecutive ABC transporter domains span residues 331–609 (WAKS…PKSL) and 629–958 (PKKG…HFLK). 662-669 (GVSGGGKS) provides a ligand contact to ATP. The C4-type zinc-finger motif lies at 761-787 (CEACQGDGVIKIEMHFLPDVYVTCDVC).

Belongs to the ABC transporter superfamily. UvrA family. Forms a heterotetramer with UvrB during the search for lesions.

It is found in the cytoplasm. The UvrABC repair system catalyzes the recognition and processing of DNA lesions. UvrA is an ATPase and a DNA-binding protein. A damage recognition complex composed of 2 UvrA and 2 UvrB subunits scans DNA for abnormalities. When the presence of a lesion has been verified by UvrB, the UvrA molecules dissociate. This is UvrABC system protein A from Agrobacterium fabrum (strain C58 / ATCC 33970) (Agrobacterium tumefaciens (strain C58)).